The chain runs to 66 residues: Prokaryotic ubiquitin-like protein Pup (66 aa).

Residues 1–10 (MAGQEQQSSS) show a composition bias toward low complexity. The tract at residues 1-39 (MAGQEQQSSSPREEEHEVADAPVPVPSSPQASAHTDGVD) is disordered. Residues 23-60 (VPVPSSPQASAHTDGVDDLLDEIDGVLESNAEEFVRGF) form an ARC ATPase binding region. Q66 is subject to Deamidated glutamine. Q66 participates in a covalent cross-link: Isoglutamyl lysine isopeptide (Gln-Lys) (interchain with K-? in acceptor proteins).

This sequence belongs to the prokaryotic ubiquitin-like protein family. In terms of assembly, strongly interacts with the proteasome-associated ATPase ARC through a hydrophobic interface; the interacting region of Pup lies in its C-terminal half. There is one Pup binding site per ARC hexamer ring. In terms of processing, is modified by deamidation of its C-terminal glutamine to glutamate by the deamidase Dop, a prerequisite to the subsequent pupylation process.

Its pathway is protein degradation; proteasomal Pup-dependent pathway. Functionally, protein modifier that is covalently attached to lysine residues of substrate proteins, thereby targeting them for proteasomal degradation. The tagging system is termed pupylation. In Renibacterium salmoninarum (strain ATCC 33209 / DSM 20767 / JCM 11484 / NBRC 15589 / NCIMB 2235), this protein is Prokaryotic ubiquitin-like protein Pup.